A 130-amino-acid polypeptide reads, in one-letter code: Cuticle protein 14 isoform a (130 aa).

One can recognise a Chitin-binding type R&amp;R domain in the interval 24–90; it reads IGNYNFGYNE…NVHTNEPGTD (67 aa).

The protein is Cuticle protein 14 isoform a of Limulus polyphemus (Atlantic horseshoe crab).